The sequence spans 362 residues: METIHVDLAERSYPISIGAELFCNPAHFSSVIPAKKRVVVISNVTVAPLYAQQIIDTLNTFECQVSLLELDDGEQYKNLDTFNQILTFLLEENHSRDVTIVALGGGVVGDVVGFASACYQRGVDFIQIPTTLLSQVDSSVGGKTAINHPLGKNMVGAFYQPKAVIIDINCLKTLPEREFAAGMAEVIKYGIIVDREFFDWLDENMDKLYALDHDALIYAISRCCQIKADVVAKDEKESGMRALLNLGHTFGHAIEAEMGYGNWLHGEAVSAGTVMAAVTAQKEGLISQSDVERICSILEKAKLPLKAPKEMTVDAFMKHMMRDKKVLSGKLRLVLPTSIGSSEVVTGVSESVLAEVIEQCKA.

Residues 72-77 (DGEQYK), 106-110 (GVVGD), 130-131 (TT), Lys143, Lys152, and 170-173 (CLKT) contribute to the NAD(+) site. 3 residues coordinate Zn(2+): Glu185, His248, and His265.

The protein belongs to the sugar phosphate cyclases superfamily. Dehydroquinate synthase family. The cofactor is Co(2+). It depends on Zn(2+) as a cofactor. Requires NAD(+) as cofactor.

It localises to the cytoplasm. The catalysed reaction is 7-phospho-2-dehydro-3-deoxy-D-arabino-heptonate = 3-dehydroquinate + phosphate. It functions in the pathway metabolic intermediate biosynthesis; chorismate biosynthesis; chorismate from D-erythrose 4-phosphate and phosphoenolpyruvate: step 2/7. Catalyzes the conversion of 3-deoxy-D-arabino-heptulosonate 7-phosphate (DAHP) to dehydroquinate (DHQ). This chain is 3-dehydroquinate synthase, found in Aliivibrio fischeri (strain ATCC 700601 / ES114) (Vibrio fischeri).